The following is a 1088-amino-acid chain: Calcium-transporting ATPase 5, plasma membrane-type (1088 aa).

Over residues 1–11 (MESASSSLATS) the composition is skewed to low complexity. The tract at residues 1 to 32 (MESASSSLATSGRRRSSSGGGGGSWGSIGSAA) is disordered. Topologically, residues 1 to 198 (MESASSSLAT…FLWDACKDLT (198 aa)) are cytoplasmic. A helical membrane pass occupies residues 199–219 (LIILMVAAAVSLALGITTEGI). Over 220–221 (KE) the chain is Extracellular. Residues 222-242 (GWYDGASIAFAVLLVVVVTAT) form a helical membrane-spanning segment. Topologically, residues 243–338 (SDYKQSLQFQ…MSGCKVADGY (96 aa)) are cytoplasmic. A helical membrane pass occupies residues 339 to 359 (GTMLVTAVGINTEWGLLMASI). At 360 to 375 (SEDSGEETPLQVRLNG) the chain is on the extracellular side. Residues 376–396 (VATFIGMVGLSVALAVLVVLL) traverse the membrane as a helical segment. Residues 397–425 (ARYFTGHTYNPDGSVQYVKGKMGVGQTIR) lie on the Cytoplasmic side of the membrane. A helical membrane pass occupies residues 426–446 (GIVGIFTVAVTIVVVAVPEGL). The Extracellular segment spans residues 447 to 851 (PLAVTLTLAF…GRSVYANIQK (405 aa)). The active-site 4-aspartylphosphate intermediate is the D486. N532, N569, and N737 each carry an N-linked (GlcNAc...) asparagine glycan. Positions 794 and 798 each coordinate Mg(2+). The chain crosses the membrane as a helical span at residues 852–872 (FIQFQLTVNVAALIINVVAAV). Over 873–880 (SSGNVPLN) the chain is Cytoplasmic. The chain crosses the membrane as a helical span at residues 881–901 (AVQLLWVNLIMDTLGALALAT). At 902–919 (EPPTDHLMQRPPVGRREP) the chain is on the extracellular side. The chain crosses the membrane as a helical span at residues 920 to 940 (LITNVMWRNLIIMALFQVIVL). The Cytoplasmic portion of the chain corresponds to 941-1000 (LTLNFRGTSLLQLKNDNQAHADKVKNTFIFNTFVLCQVFNEFNARKPDELNIFKGITGNH). A helical membrane pass occupies residues 1001–1021 (LFMAIVAITVVLQALIVEFLG). The Extracellular segment spans residues 1022–1030 (KFTSTTRLT). The helical transmembrane segment at 1031 to 1051 (WQLWLVSIGLAFFSWPLAFVG) threads the bilayer. Residues 1052-1088 (KLIPVPERPLGDFFACCCPGSKQAADAKGDDADHSDV) are Cytoplasmic-facing.

The protein belongs to the cation transport ATPase (P-type) (TC 3.A.3) family. Type IIB subfamily. In terms of assembly, interacts with NOH1.

It localises to the cell membrane. The enzyme catalyses Ca(2+)(in) + ATP + H2O = Ca(2+)(out) + ADP + phosphate + H(+). With respect to regulation, activated by calmodulin. Functionally, this magnesium-dependent enzyme catalyzes the hydrolysis of ATP coupled with the translocation of calcium from the cytosol out of the cell, into the endoplasmic reticulum, or into organelles. Involved in salt and drought stress tolerance. Involved in cold stress tolerance. In Oryza sativa subsp. japonica (Rice), this protein is Calcium-transporting ATPase 5, plasma membrane-type.